We begin with the raw amino-acid sequence, 130 residues long: Histidine triad nucleotide-binding protein 1 (130 aa).

The 109-residue stretch at 22-130 folds into the HIT domain; it reads LFGKIIRKEI…GGRQLQWPPG (109 aa). The Histidine triad motif signature appears at 114–118; the sequence is HLHLH.

This chain is Histidine triad nucleotide-binding protein 1 (hint-1), found in Caenorhabditis elegans.